The chain runs to 781 residues: Coiled-coil and C2 domain-containing protein 1-like (781 aa).

Disordered stretches follow at residues 32-63 (MGRV…NVPG), 94-134 (ELNG…APNS), 187-296 (ESEI…AKES), 313-373 (CSAD…TEGN), and 403-447 (GELP…VEGK). Residues 37 to 59 (RPAAPARGAPPAARGRPAPAAPA) are compositionally biased toward low complexity. The segment covering 98 to 107 (LVGGGGGGGA) has biased composition (gly residues). Low complexity predominate over residues 108 to 118 (APTVPTRAAPR). Composition is skewed to pro residues over residues 119–129 (APGPSGPPPSA) and 204–222 (PLPP…PAPP). The span at 244–256 (APAPTAAAPPATK) shows a compositional bias: low complexity. Over residues 269–280 (ILHHRRDLHKQN) the composition is skewed to basic residues. Positions 285-296 (IADKDKESAKES) are enriched in basic and acidic residues. Residues 324–341 (PPSPPPYRKPAPPQPQAP) are compositionally biased toward pro residues. The span at 363-373 (KMAEKAKTEGN) shows a compositional bias: basic and acidic residues. A C2 domain is found at 605 to 741 (YEMRQIPSAD…EHSAEMEESL (137 aa)).

The protein belongs to the CC2D1 family.

This chain is Coiled-coil and C2 domain-containing protein 1-like, found in Caenorhabditis elegans.